Here is a 334-residue protein sequence, read N- to C-terminus: Formamidase (334 aa).

In terms of domain architecture, CN hydrolase spans 14–260 (FLVAAIQFPV…WEIVTGEIYP (247 aa)). E60 functions as the Proton acceptor in the catalytic mechanism. The active-site Proton donor is the K133. C166 (nucleophile) is an active-site residue.

This sequence belongs to the carbon-nitrogen hydrolase superfamily. Aliphatic amidase family. As to quaternary structure, homotetramer.

It catalyses the reaction formamide + H2O = formate + NH4(+). With respect to regulation, inhibited by iodoacetate. Appears to be regulated by the fur protein, but this effect is not mediated at the transcriptional level. Is an aliphatic amidase with a restricted substrate specificity, as it only hydrolyzes formamide. Probably involved in the nitrogen metabolism of H.pylori. This chain is Formamidase (amiF), found in Helicobacter pylori (strain ATCC 700392 / 26695) (Campylobacter pylori).